The sequence spans 441 residues: D-aminoacyl-tRNA deacylase (441 aa).

This sequence belongs to the DtdA deacylase family. Monomer. It depends on Zn(2+) as a cofactor.

The enzyme catalyses a D-aminoacyl-tRNA + H2O = a tRNA + a D-alpha-amino acid + H(+). It carries out the reaction glycyl-tRNA(Ala) + H2O = tRNA(Ala) + glycine + H(+). Its function is as follows. D-aminoacyl-tRNA deacylase with broad substrate specificity. By recycling D-aminoacyl-tRNA to D-amino acids and free tRNA molecules, this enzyme counteracts the toxicity associated with the formation of D-aminoacyl-tRNA entities in vivo. The polypeptide is D-aminoacyl-tRNA deacylase (Natronomonas pharaonis (strain ATCC 35678 / DSM 2160 / CIP 103997 / JCM 8858 / NBRC 14720 / NCIMB 2260 / Gabara) (Halobacterium pharaonis)).